Consider the following 619-residue polypeptide: Teichoic acid poly(ribitol-phosphate) polymerase (619 aa).

The protein belongs to the CDP-glycerol glycerophosphotransferase family.

It is found in the cell membrane. It carries out the reaction 4-O-[1-D-ribitylphospho-(2R)-1-glycerylphospho]-N-acetyl-beta-D-mannosaminyl-(1-&gt;4)-N-acetyl-alpha-D-glucosaminyl di-trans,octa-cis-undecaprenyl diphosphate + n CDP-L-ribitol = 4-O-[(D-ribitylphospho)(n)-D-ribitylphospho-(2R)-glycerylphospho]-N-acetyl-beta-D-mannosaminyl-(1-&gt;4)-N-acetyl-alpha-D-glucosaminyl di-trans,octa-cis-undecaprenyl diphosphate + n CMP + n H(+). Its pathway is cell wall biogenesis; poly(ribitol phosphate) teichoic acid biosynthesis. Responsible for the polymerization of the main chain of the major teichoic acid by sequential transfer of ribitol phosphate units from CDP-ribitol to the glycerol phosphate attached to the disaccharide linkage unit. Synthesizes polymers of up to 40 ribitol phosphate units in length. This is Teichoic acid poly(ribitol-phosphate) polymerase (tarL) from Bacillus spizizenii (strain ATCC 23059 / NRRL B-14472 / W23) (Bacillus subtilis subsp. spizizenii).